A 685-amino-acid chain; its full sequence is MAETNHSKRISELRSLLNKANHAYYILDSPLIEDAVFDRLYRELIELEKQYPSLVTPDSPSQRLGNKPATKFESIKHRIPLQSLDNAFNFDELNYWHSRMQKHLKSHSAMVCELKIDGNALALSYVNGVLTRGATRGDGAEGEEITANVKTIVSIPLSLHLQNPPAWVEIRGEAFIPNKVFISLNKERLKEEKQLFANPRNACSGTLRQLDSRIVASRHLDFFAYTIHLPDDWIPGETDPKKPKGQWEALLWLKAAGFRVNPNAKLISQPDQVEKFCIDWEKRRHQLPYTTDGIVIKIDDFKLQKTLGITQKAPRWAIALKYPAEEAPTQLNKLIFQTGRTGTVTPVAEFNPIPLGGTLVSKATLHNANRLSELDIHEGDTIVIRKAGEIIPEVIRVIKELRPNNAKKLVLPEKCPECNSKLLKETGEAATKCLNNDCPAILRGVLRHWVSKGAMNIDGFGTKLVEQLVKRKIIKSIAGIYELKEKNLENLERMGTKSAEKLLIEINNSKKQPWHKQLYGLGILHIGEANAKAIAEVFPSISLLADAAIASPESISNIYGIGSEITESLHKWFNCSINQNLIKELKDLGIALERVNEEGAIDNILMQEKLQFSGKTFVITGTMPSLSRANLEELIEREGGKVNSSVSSKTNYLVAGEKPGNKLKKAKELGIKVINEQELMTLISN.

NAD(+)-binding positions include 34–38 (DAVFD), 83–84 (SL), and Glu113. Lys115 (N6-AMP-lysine intermediate) is an active-site residue. NAD(+) contacts are provided by Arg136, Glu173, Lys297, and Lys321. Cys415, Cys418, Cys433, and Cys438 together coordinate Zn(2+). One can recognise a BRCT domain in the interval 607–685 (QEKLQFSGKT…EQELMTLISN (79 aa)).

The protein belongs to the NAD-dependent DNA ligase family. LigA subfamily. Requires Mg(2+) as cofactor. The cofactor is Mn(2+).

It carries out the reaction NAD(+) + (deoxyribonucleotide)n-3'-hydroxyl + 5'-phospho-(deoxyribonucleotide)m = (deoxyribonucleotide)n+m + AMP + beta-nicotinamide D-nucleotide.. In terms of biological role, DNA ligase that catalyzes the formation of phosphodiester linkages between 5'-phosphoryl and 3'-hydroxyl groups in double-stranded DNA using NAD as a coenzyme and as the energy source for the reaction. It is essential for DNA replication and repair of damaged DNA. This is DNA ligase from Prochlorococcus marinus (strain SARG / CCMP1375 / SS120).